The primary structure comprises 239 residues: 1-(5-phosphoribosyl)-5-[(5-phosphoribosylamino)methylideneamino] imidazole-4-carboxamide isomerase (239 aa).

Aspartate 9 acts as the Proton acceptor in catalysis. Catalysis depends on aspartate 131, which acts as the Proton donor.

It belongs to the HisA/HisF family.

Its subcellular location is the cytoplasm. The catalysed reaction is 1-(5-phospho-beta-D-ribosyl)-5-[(5-phospho-beta-D-ribosylamino)methylideneamino]imidazole-4-carboxamide = 5-[(5-phospho-1-deoxy-D-ribulos-1-ylimino)methylamino]-1-(5-phospho-beta-D-ribosyl)imidazole-4-carboxamide. Its pathway is amino-acid biosynthesis; L-histidine biosynthesis; L-histidine from 5-phospho-alpha-D-ribose 1-diphosphate: step 4/9. The chain is 1-(5-phosphoribosyl)-5-[(5-phosphoribosylamino)methylideneamino] imidazole-4-carboxamide isomerase from Bacteroides thetaiotaomicron (strain ATCC 29148 / DSM 2079 / JCM 5827 / CCUG 10774 / NCTC 10582 / VPI-5482 / E50).